A 490-amino-acid chain; its full sequence is Bifunctional protein HldE (490 aa).

A ribokinase region spans residues 1-330 (MERKNVESLF…GSMGFQHSDS (330 aa)). An ATP-binding site is contributed by 205-208 (NRKE). Residue Asp-275 is part of the active site. A cytidylyltransferase region spans residues 356–490 (FTNGCFDLLH…DKILRAYGEE (135 aa)).

This sequence in the N-terminal section; belongs to the carbohydrate kinase PfkB family. It in the C-terminal section; belongs to the cytidylyltransferase family. In terms of assembly, homodimer.

The catalysed reaction is D-glycero-beta-D-manno-heptose 7-phosphate + ATP = D-glycero-beta-D-manno-heptose 1,7-bisphosphate + ADP + H(+). It catalyses the reaction D-glycero-beta-D-manno-heptose 1-phosphate + ATP + H(+) = ADP-D-glycero-beta-D-manno-heptose + diphosphate. It functions in the pathway nucleotide-sugar biosynthesis; ADP-L-glycero-beta-D-manno-heptose biosynthesis; ADP-L-glycero-beta-D-manno-heptose from D-glycero-beta-D-manno-heptose 7-phosphate: step 1/4. Its pathway is nucleotide-sugar biosynthesis; ADP-L-glycero-beta-D-manno-heptose biosynthesis; ADP-L-glycero-beta-D-manno-heptose from D-glycero-beta-D-manno-heptose 7-phosphate: step 3/4. Its function is as follows. Catalyzes the phosphorylation of D-glycero-D-manno-heptose 7-phosphate at the C-1 position to selectively form D-glycero-beta-D-manno-heptose-1,7-bisphosphate. Catalyzes the ADP transfer from ATP to D-glycero-beta-D-manno-heptose 1-phosphate, yielding ADP-D-glycero-beta-D-manno-heptose. This is Bifunctional protein HldE from Geobacter metallireducens (strain ATCC 53774 / DSM 7210 / GS-15).